The following is a 271-amino-acid chain: Thiazole synthase (271 aa).

The Schiff-base intermediate with DXP role is filled by Lys-104. 1-deoxy-D-xylulose 5-phosphate is bound by residues Gly-165, 192 to 193 (AG), and 214 to 215 (NT).

Belongs to the ThiG family. In terms of assembly, homotetramer. Forms heterodimers with either ThiH or ThiS.

The protein localises to the cytoplasm. The catalysed reaction is [ThiS sulfur-carrier protein]-C-terminal-Gly-aminoethanethioate + 2-iminoacetate + 1-deoxy-D-xylulose 5-phosphate = [ThiS sulfur-carrier protein]-C-terminal Gly-Gly + 2-[(2R,5Z)-2-carboxy-4-methylthiazol-5(2H)-ylidene]ethyl phosphate + 2 H2O + H(+). It functions in the pathway cofactor biosynthesis; thiamine diphosphate biosynthesis. Functionally, catalyzes the rearrangement of 1-deoxy-D-xylulose 5-phosphate (DXP) to produce the thiazole phosphate moiety of thiamine. Sulfur is provided by the thiocarboxylate moiety of the carrier protein ThiS. In vitro, sulfur can be provided by H(2)S. The protein is Thiazole synthase of Burkholderia thailandensis (strain ATCC 700388 / DSM 13276 / CCUG 48851 / CIP 106301 / E264).